Here is a 105-residue protein sequence, read N- to C-terminus: Small ribosomal subunit protein uS10 (105 aa).

Belongs to the universal ribosomal protein uS10 family. As to quaternary structure, part of the 30S ribosomal subunit.

Involved in the binding of tRNA to the ribosomes. This chain is Small ribosomal subunit protein uS10, found in Rickettsia rickettsii (strain Iowa).